A 134-amino-acid polypeptide reads, in one-letter code: Small ribosomal subunit protein bS16 (134 aa).

The tract at residues 115–134 (AKLRRRQAKKAAEAAGSAEG) is disordered.

Belongs to the bacterial ribosomal protein bS16 family.

In Chlorobaculum tepidum (strain ATCC 49652 / DSM 12025 / NBRC 103806 / TLS) (Chlorobium tepidum), this protein is Small ribosomal subunit protein bS16.